A 290-amino-acid polypeptide reads, in one-letter code: L-cysteine S-thiosulfotransferase subunit SoxA (290 aa).

The N-terminal stretch at 1–26 (MPRFTKTKGTLAATALGLALAGAAFA) is a signal peptide. Residues D78 and D81 each coordinate Zn(2+). A Cytochrome c domain is found at 78–171 (DDFDNPAMVF…DMLSLISLQS (94 aa)). 4 residues coordinate heme c: C106, C109, H110, and C143. H190 serves as a coordination point for Zn(2+). The heme c site is built by C206, C209, and H210. R247 is a binding site for substrate. C251 is a heme c binding site. The Cysteine persulfide intermediate role is filled by C251. Position 266 (D266) interacts with Zn(2+).

This sequence belongs to the SoxA family. Heterodimer of SoxA and SoxX. Requires heme c as cofactor. Zn(2+) is required as a cofactor. Cysteine persulfide at Cys-251.

Its subcellular location is the periplasm. It catalyses the reaction L-cysteinyl-[SoxY protein] + thiosulfate + 2 Fe(III)-[cytochrome c] = S-sulfosulfanyl-L-cysteinyl-[SoxY protein] + 2 Fe(II)-[cytochrome c] + 2 H(+). The catalysed reaction is S-sulfanyl-L-cysteinyl-[SoxY protein] + thiosulfate + 2 Fe(III)-[cytochrome c] = S-(2-sulfodisulfanyl)-L-cysteinyl-[SoxY protein] + 2 Fe(II)-[cytochrome c] + 2 H(+). C-type diheme cytochrome, which is part of the SoxAX cytochrome complex involved in sulfur oxidation. The SoxAX complex catalyzes the formation of a heterodisulfide bond between the conserved cysteine residue on a sulfur carrier SoxYZ complex subunit SoxY and thiosulfate or other inorganic sulfur substrates. This leads to the liberation of two electrons, which may be transferred from the SoxAX complex to another cytochrome c that then channels them into the respiratory electron transport chain. Some electrons may be used for reductive CO(2) fixation. The polypeptide is L-cysteine S-thiosulfotransferase subunit SoxA (Paracoccus pantotrophus (Thiosphaera pantotropha)).